The chain runs to 146 residues: MDKVKLFQTIGRVEYWERVPRLHAYGVFALPFPMDPDVNWAQWFTGPHPRAFLVSIHKYGPKAGHVYPTNLTDEDALLNVIGMVLDGHDYENDPNVTVTLKAAVPIEYVQQDPQAPALQPHQAVLDAAEVLKLKVIKGHYFFDYTR.

Homotrimer. Interacts with the major capsid protein.

The protein localises to the virion. Cooperatively binds the expanded capsid, thereby stabilizing the mature capsid shell and allowing the large viral DNA to be packaged. Trimers of capsid decoration proteins molecules are located at local and icosahedral threefold axes and stabilize the expanded capsid, which shows increased spacing between capsomers. In Thermus thermophilus (Thermus thermophilus phage P23-45), this protein is Decoration protein.